We begin with the raw amino-acid sequence, 223 residues long: MGQKVNPNGIRLGYIRDWRSTWYADSSRYATKLNEDIKVREFLHKKLAAAAVSKIQIERPAQNAKITIHTARPGIVIGKKGEDVEKLRAEVHKLMGIPVQINIEEVRKPEIDAKLVAESVAQQLEKRVMFRRAMKKAMQAAMKSGAKGIKIMVSGRLGGAEIARSEWARDGRVPLQTFRADVDYATAEALTTYGVIGVKVWIYKGEILPGQIAEKKNNKKGAK.

Positions 39 to 107 (VREFLHKKLA…PVQINIEEVR (69 aa)) constitute a KH type-2 domain.

This sequence belongs to the universal ribosomal protein uS3 family. As to quaternary structure, part of the 30S ribosomal subunit. Forms a tight complex with proteins S10 and S14.

Its function is as follows. Binds the lower part of the 30S subunit head. Binds mRNA in the 70S ribosome, positioning it for translation. This is Small ribosomal subunit protein uS3 from Francisella tularensis subsp. holarctica (strain FTNF002-00 / FTA).